A 466-amino-acid polypeptide reads, in one-letter code: Ribulose bisphosphate carboxylase large chain (466 aa).

Lys-5 carries the N6,N6,N6-trimethyllysine modification. Substrate is bound by residues Asn-114 and Thr-164. Catalysis depends on Lys-166, which acts as the Proton acceptor. Position 168 (Lys-168) interacts with substrate. Residues Lys-192, Asp-194, and Glu-195 each contribute to the Mg(2+) site. An N6-carboxylysine modification is found at Lys-192. The active-site Proton acceptor is His-285. Residues Arg-286, His-318, and Ser-370 each contribute to the substrate site.

Belongs to the RuBisCO large chain family. Type I subfamily. As to quaternary structure, heterohexadecamer of 8 large chains and 8 small chains; disulfide-linked. The disulfide link is formed within the large subunit homodimers. Mg(2+) serves as cofactor. Post-translationally, the disulfide bond which can form in the large chain dimeric partners within the hexadecamer appears to be associated with oxidative stress and protein turnover.

The protein localises to the plastid. It is found in the chloroplast. The enzyme catalyses 2 (2R)-3-phosphoglycerate + 2 H(+) = D-ribulose 1,5-bisphosphate + CO2 + H2O. It catalyses the reaction D-ribulose 1,5-bisphosphate + O2 = 2-phosphoglycolate + (2R)-3-phosphoglycerate + 2 H(+). In terms of biological role, ruBisCO catalyzes two reactions: the carboxylation of D-ribulose 1,5-bisphosphate, the primary event in carbon dioxide fixation, as well as the oxidative fragmentation of the pentose substrate in the photorespiration process. Both reactions occur simultaneously and in competition at the same active site. This Hedera helix (English ivy) protein is Ribulose bisphosphate carboxylase large chain.